The chain runs to 872 residues: Alanine--tRNA ligase (872 aa).

Residues His-558, His-562, Cys-660, and His-664 each coordinate Zn(2+).

Belongs to the class-II aminoacyl-tRNA synthetase family. Requires Zn(2+) as cofactor.

It localises to the cytoplasm. It carries out the reaction tRNA(Ala) + L-alanine + ATP = L-alanyl-tRNA(Ala) + AMP + diphosphate. In terms of biological role, catalyzes the attachment of alanine to tRNA(Ala) in a two-step reaction: alanine is first activated by ATP to form Ala-AMP and then transferred to the acceptor end of tRNA(Ala). Also edits incorrectly charged Ser-tRNA(Ala) and Gly-tRNA(Ala) via its editing domain. This is Alanine--tRNA ligase from Chlamydia pneumoniae (Chlamydophila pneumoniae).